A 661-amino-acid polypeptide reads, in one-letter code: MQANGAGGGGGGGGGGGGGGGGGGGQGQTPELACLSAQNGESSPSSSSSAGDLAHANGLLPSAPSAASNNSNSLNVNNGVPGGAAAASSATVAAASATTAASSSLATPELGSSLKKKKRLSQSDEDVIRLIGQHLNGLGLNQTVDLLMQESGCRLEHPSATKFRNHVMEGDWDKAENDLNELKPLVHSPHAIVVRGALEISQTLLGIIVRMKFLLLQQKYLEYLEDGKVLEALQVLRCELTPLKYNTERIHVLSGYLMCSHAEDLRAKAEWEGKGTASRSKLLDKLQTYLPPSVMLPPRRLQTLLRQAVELQRDRCLYHNTKLDNNLDSVSLLIDHVCSRRQFPCYTQQILTEHCNEVWFCKFSNDGTKLATGSKDTTVIIWQVDPDTHLLKLLKTLEGHAYGVSYIAWSPDDNYLVACGPDDCSELWLWNVQTGELRTKMSQSHEDSLTSVAWNPDGKRFVTGGQRGQFYQCDLDGNLLDSWEGVRVQCLWCLSDGKTVLASDTHQRIRGYNFEDLTDRNIVQEDHPIMSFTISKNGRLALLNVATQGVHLWDLQDRVLVRKYQGVTQGFYTIHSCFGGHNEDFIASGSEDHKVYIWHKRSELPIAELTGHTRTVNCVSWNPQIPSMMASASDDGTVRIWGPAPFIDHQNIEEECSSMDS.

Over residues 1–27 (MQANGAGGGGGGGGGGGGGGGGGGGQG) the composition is skewed to gly residues. 2 disordered regions span residues 1-70 (MQAN…ASNN) and 99-118 (TAAS…KKKK). Composition is skewed to low complexity over residues 56–70 (ANGL…ASNN) and 99–113 (TAAS…LGSS). Phosphoserine is present on residues serine 121 and serine 123. Residues 123-155 (SDEDVIRLIGQHLNGLGLNQTVDLLMQESGCRL) enclose the LisH domain. Positions 156–231 (EHPSATKFRN…EYLEDGKVLE (76 aa)) constitute a CTLH domain. WD repeat units lie at residues 353–392 (EHCN…HLLK), 399–438 (GHAY…GELR), 444–484 (SHED…DSWE), 524–563 (QEDH…LVRK), 566–608 (GVTQ…PIAE), and 611–651 (GHTR…DHQN).

Forms homooligomers. Identified in the CTLH complex that contains GID4, RANBP9 and/or RANBP10, MKLN1, MAEA, RMND5A (or alternatively its paralog RMND5B), GID8, ARMC8, WDR26 and YPEL5. Within this complex, MAEA, RMND5A (or alternatively its paralog RMND5B), GID8, WDR26, and RANBP9 and/or RANBP10 form the catalytic core, while GID4, MKLN1, ARMC8 and YPEL5 have ancillary roles. Interacts with DDB1-CUL4A/B E3 ligase complexes. Forms a complex composed of at least WDR26, a G-beta:gamma unit, and PLCB2. Interacts with AXIN1. As to expression, broadly expressed, with highest levels in heart and skeletal muscle.

The protein localises to the cytoplasm. It is found in the nucleus. The protein resides in the mitochondrion. In terms of biological role, G-beta-like protein involved in cell signal transduction. Acts as a negative regulator in MAPK signaling pathway. Functions as a scaffolding protein to promote G beta:gamma-mediated PLCB2 plasma membrane translocation and subsequent activation in leukocytes. Core component of the CTLH E3 ubiquitin-protein ligase complex that selectively accepts ubiquitin from UBE2H and mediates ubiquitination and subsequent proteasomal degradation of the transcription factor HBP1. Acts as a negative regulator of the canonical Wnt signaling pathway through preventing ubiquitination of beta-catenin CTNNB1 by the beta-catenin destruction complex, thus negatively regulating CTNNB1 degradation. Serves as a scaffold to coordinate PI3K/AKT pathway-driven cell growth and migration. Protects cells from oxidative stress-induced apoptosis via the down-regulation of AP-1 transcriptional activity as well as by inhibiting cytochrome c release from mitochondria. Also protects cells by promoting hypoxia-mediated autophagy and mitophagy. This is WD repeat-containing protein 26 (WDR26) from Homo sapiens (Human).